The following is a 198-amino-acid chain: MICOS complex subunit Mic26 (198 aa).

Residues 1–23 form the signal peptide; the sequence is MFKVIQRSVGPASLSLLTFRVYA. Asn-63 carries N-linked (GlcNAc...) asparagine glycosylation. The chain crosses the membrane as a helical span at residues 108 to 128; that stretch reads PGFFPRLGVIGFAGFVGLLFA.

Belongs to the apolipoprotein O/MICOS complex subunit Mic27 family. As to quaternary structure, component of the mitochondrial contact site and cristae organizing system (MICOS) complex, composed of at least MICOS10/MIC10, CHCHD3/MIC19, CHCHD6/MIC25, APOOL/MIC27, IMMT/MIC60, APOO/MIC23/MIC26 and MICOS13/MIC13. This complex was also known under the names MINOS or MitOS complex. The MICOS complex associates with mitochondrial outer membrane proteins SAMM50, MTX1 and MTX2 (together described as components of the mitochondrial outer membrane sorting assembly machinery (SAM) complex) and DNAJC11, mitochondrial inner membrane protein TMEM11 and with HSPA9. The MICOS and SAM complexes together with DNAJC11 are part of a large protein complex spanning both membranes termed the mitochondrial intermembrane space bridging (MIB) complex. Interacts with IMMT/MIC60. Interacts with MICOS10/MIC10 and APOOL/MIC27.

The protein localises to the mitochondrion inner membrane. The protein resides in the mitochondrion. Its subcellular location is the endoplasmic reticulum membrane. It localises to the golgi apparatus membrane. Component of the MICOS complex, a large protein complex of the mitochondrial inner membrane that plays crucial roles in the maintenance of crista junctions, inner membrane architecture, and formation of contact sites to the outer membrane. Plays a crucial role in crista junction formation and mitochondrial function. Can induce cardiac lipotoxicity by enhancing mitochondrial respiration and fatty acid metabolism in cardiac myoblasts. Promotes cholesterol efflux from macrophage cells. Detected in HDL, LDL and VLDL. Secreted by a microsomal triglyceride transfer protein (MTTP)-dependent mechanism, probably as a VLDL-associated protein that is subsequently transferred to HDL. This chain is MICOS complex subunit Mic26 (Apoo), found in Mus musculus (Mouse).